Reading from the N-terminus, the 169-residue chain is Large ribosomal subunit protein uL5 (169 aa).

It belongs to the universal ribosomal protein uL5 family. As to quaternary structure, part of the 50S ribosomal subunit; contacts the 5S rRNA and probably tRNA. Forms a bridge to the 30S subunit in the 70S ribosome.

Functionally, this is one of the proteins that bind and probably mediate the attachment of the 5S RNA into the large ribosomal subunit, where it forms part of the central protuberance. In the 70S ribosome it contacts protein S13 of the 30S subunit (bridge B1b), connecting the 2 subunits; this bridge is implicated in subunit movement. May contact the P site tRNA; the 5S rRNA and some of its associated proteins might help stabilize positioning of ribosome-bound tRNAs. This Methanosarcina barkeri (strain Fusaro / DSM 804) protein is Large ribosomal subunit protein uL5.